The following is a 261-amino-acid chain: Thiamine thiazole synthase (261 aa).

NAD(+)-binding positions include A33, 52–53 (ER), G60, V124, and 152–154 (HVD). Fe cation contacts are provided by D154 and H169. M219 lines the NAD(+) pocket. R229 lines the glycine pocket.

It belongs to the THI4 family. As to quaternary structure, homooctamer; tetramer of dimers. Fe(2+) is required as a cofactor.

It catalyses the reaction hydrogen sulfide + glycine + NAD(+) = ADP-5-ethyl-4-methylthiazole-2-carboxylate + nicotinamide + 3 H2O + H(+). It functions in the pathway cofactor biosynthesis; thiamine diphosphate biosynthesis. Its function is as follows. Involved in the biosynthesis of the thiazole moiety of thiamine. Catalyzes the conversion of NAD and glycine to adenosine diphosphate 5-(2-hydroxyethyl)-4-methylthiazole-2-carboxylate (ADT), an adenylated thiazole intermediate, using free sulfide as a source of sulfur. The polypeptide is Thiamine thiazole synthase (Pyrobaculum islandicum (strain DSM 4184 / JCM 9189 / GEO3)).